Consider the following 346-residue polypeptide: Probable dual-specificity RNA methyltransferase RlmN (346 aa).

E76 acts as the Proton acceptor in catalysis. The 233-residue stretch at 97 to 329 folds into the Radical SAM core domain; it reads SYDRATICVS…TFIRKPRGRD (233 aa). An intrachain disulfide couples C104 to C334. 3 residues coordinate [4Fe-4S] cluster: C111, C115, and C118. S-adenosyl-L-methionine is bound by residues 162-163, S192, 215-217, and N291; these read GE and SLN. C334 functions as the S-methylcysteine intermediate in the catalytic mechanism.

The protein belongs to the radical SAM superfamily. RlmN family. [4Fe-4S] cluster is required as a cofactor.

It localises to the cytoplasm. It catalyses the reaction adenosine(2503) in 23S rRNA + 2 reduced [2Fe-2S]-[ferredoxin] + 2 S-adenosyl-L-methionine = 2-methyladenosine(2503) in 23S rRNA + 5'-deoxyadenosine + L-methionine + 2 oxidized [2Fe-2S]-[ferredoxin] + S-adenosyl-L-homocysteine. The catalysed reaction is adenosine(37) in tRNA + 2 reduced [2Fe-2S]-[ferredoxin] + 2 S-adenosyl-L-methionine = 2-methyladenosine(37) in tRNA + 5'-deoxyadenosine + L-methionine + 2 oxidized [2Fe-2S]-[ferredoxin] + S-adenosyl-L-homocysteine. Its function is as follows. Specifically methylates position 2 of adenine 2503 in 23S rRNA and position 2 of adenine 37 in tRNAs. This chain is Probable dual-specificity RNA methyltransferase RlmN, found in Koribacter versatilis (strain Ellin345).